The following is a 396-amino-acid chain: S-adenosylmethionine synthase 3 (396 aa).

A Mg(2+)-binding site is contributed by glutamate 13. Histidine 19 lines the ATP pocket. K(+) is bound at residue glutamate 47. The L-methionine site is built by glutamate 60 and glutamine 103. Residues 171–173 (DGK), 239–242 (SGRF), aspartate 250, 256–257 (RK), alanine 273, lysine 277, and lysine 281 each bind ATP. Aspartate 250 contacts L-methionine. Lysine 281 is an L-methionine binding site.

This sequence belongs to the AdoMet synthase family. As to quaternary structure, homotetramer. Mn(2+) serves as cofactor. Requires Mg(2+) as cofactor. Co(2+) is required as a cofactor. The cofactor is K(+). Expressed in roots, stems and leaves (at protein level).

The protein localises to the cytoplasm. It catalyses the reaction L-methionine + ATP + H2O = S-adenosyl-L-methionine + phosphate + diphosphate. It participates in amino-acid biosynthesis; S-adenosyl-L-methionine biosynthesis; S-adenosyl-L-methionine from L-methionine: step 1/1. Catalyzes the formation of S-adenosylmethionine from methionine and ATP. The reaction comprises two steps that are both catalyzed by the same enzyme: formation of S-adenosylmethionine (AdoMet) and triphosphate, and subsequent hydrolysis of the triphosphate. May be involved in the synthesis of betain in response to abiotic stress such as high salinity. The protein is S-adenosylmethionine synthase 3 (SAMS3) of Atriplex nummularia (Old man saltbush).